Consider the following 1149-residue polypeptide: ATP-dependent helicase/deoxyribonuclease subunit B (1149 aa).

ATP is bound at residue 8–15 (GRAGSGKS). C788, C1106, C1109, and C1115 together coordinate [4Fe-4S] cluster.

This sequence belongs to the helicase family. AddB/RexB type 1 subfamily. As to quaternary structure, heterodimer of AddA and AddB. Mg(2+) is required as a cofactor. The cofactor is [4Fe-4S] cluster.

The heterodimer acts as both an ATP-dependent DNA helicase and an ATP-dependent, dual-direction single-stranded exonuclease. Recognizes the chi site generating a DNA molecule suitable for the initiation of homologous recombination. The AddB subunit has 5' -&gt; 3' nuclease activity but not helicase activity. The sequence is that of ATP-dependent helicase/deoxyribonuclease subunit B from Ruminiclostridium cellulolyticum (strain ATCC 35319 / DSM 5812 / JCM 6584 / H10) (Clostridium cellulolyticum).